The following is a 206-amino-acid chain: Large ribosomal subunit protein uL4 (206 aa).

A disordered region spans residues 42 to 94 (RRQQGSHKAQGRGDVSRTGSKMYKQKGTGRARHHSARAPQFRGGGQAHGPVVR). The span at 64–77 (YKQKGTGRARHHSA) shows a compositional bias: basic residues.

This sequence belongs to the universal ribosomal protein uL4 family. As to quaternary structure, part of the 50S ribosomal subunit.

Functionally, one of the primary rRNA binding proteins, this protein initially binds near the 5'-end of the 23S rRNA. It is important during the early stages of 50S assembly. It makes multiple contacts with different domains of the 23S rRNA in the assembled 50S subunit and ribosome. Forms part of the polypeptide exit tunnel. This Brucella abortus biovar 1 (strain 9-941) protein is Large ribosomal subunit protein uL4.